A 104-amino-acid polypeptide reads, in one-letter code: Cell division protein FtsB (104 aa).

Residues 1–3 are Cytoplasmic-facing; the sequence is MGK. The helical transmembrane segment at 4-21 threads the bilayer; sequence LTLLLLVLLGWLQYSLWL. Topologically, residues 22–104 are periplasmic; that stretch reads GKNGIHDYTR…NAQQGRPASQ (83 aa). Residues 33–62 adopt a coiled-coil conformation; that stretch reads DEDVASQQGNNAKLKARNDRLFAEIDDLNG.

This sequence belongs to the FtsB family. As to quaternary structure, part of a complex composed of FtsB, FtsL and FtsQ.

It is found in the cell inner membrane. In terms of biological role, essential cell division protein. May link together the upstream cell division proteins, which are predominantly cytoplasmic, with the downstream cell division proteins, which are predominantly periplasmic. The chain is Cell division protein FtsB from Erwinia tasmaniensis (strain DSM 17950 / CFBP 7177 / CIP 109463 / NCPPB 4357 / Et1/99).